Reading from the N-terminus, the 449-residue chain is Delta(8)-fatty-acid desaturase 2 (449 aa).

In terms of domain architecture, Cytochrome b5 heme-binding spans Lys-7 to Ser-91. Residues His-42 and His-65 each coordinate heme. The next 2 helical transmembrane spans lie at Val-113–Leu-133 and Ile-138–Val-158. The short motif at His-160–His-164 is the Histidine box-1 element. Residues Leu-176–Thr-196 form a helical membrane-spanning segment. The Histidine box-2 motif lies at His-197–His-201. The next 3 helical transmembrane spans lie at Phe-255–Phe-275, Ala-284–Leu-304, and Phe-311–Asn-331. Residues Gln-374–His-378 carry the Histidine box-3 motif.

This sequence belongs to the fatty acid desaturase type 1 family. It depends on Fe cation as a cofactor. In terms of tissue distribution, highly expressed in flowers and siliques. Expressed at low levels in roots, leaves and stems.

Its subcellular location is the endoplasmic reticulum membrane. The enzyme catalyses an N-acyl-(4R)-4-hydroxysphinganine + 2 Fe(II)-[cytochrome b5] + O2 + 2 H(+) = a (4R,8E)-4-hydroxysphingenine ceramide + 2 Fe(III)-[cytochrome b5] + 2 H2O. It carries out the reaction an N-acyl-(4R)-4-hydroxysphinganine + 2 Fe(II)-[cytochrome b5] + O2 + 2 H(+) = a (4R,8Z)-4-hydroxysphing-8-enine ceramide + 2 Fe(III)-[cytochrome b5] + 2 H2O. Functionally, plays a major role as delta(8)-fatty-acid desaturase which introduces a double bond at the 8-position in the long-chain base (LCB) of ceramides with or without a hydroxy group at the 4-position. The enzyme produces both the 8E and 8Z isomers (in a 4:1 ratio). This structural modification contributes to the quantitative partitioning of ceramides between the two major sphingolipid classes, glucosylceramides and glycosylinositolphosphoryl ceramides. Sphingolipids are important membrane components involved in environmental stress responses, such as resistance to chilling, and act as cell signaling molecules. The polypeptide is Delta(8)-fatty-acid desaturase 2 (SLD2) (Arabidopsis thaliana (Mouse-ear cress)).